Reading from the N-terminus, the 176-residue chain is Ferredoxin-type protein NapF (176 aa).

2 4Fe-4S ferredoxin-type domains span residues 39 to 68 (VENS…KGDA) and 71 to 100 (PEVR…PRDQ). Residues cysteine 48, cysteine 51, cysteine 54, cysteine 58, cysteine 80, cysteine 83, cysteine 86, cysteine 90, cysteine 113, cysteine 121, cysteine 124, cysteine 128, cysteine 152, cysteine 155, cysteine 158, and cysteine 162 each coordinate [4Fe-4S] cluster. 4Fe-4S ferredoxin-type domains are found at residues 119–138 (IECR…FKLQ) and 143–172 (AQPL…MNDL).

The protein belongs to the NapF family. As to quaternary structure, interacts with the cytoplasmic NapA precursor. [4Fe-4S] cluster is required as a cofactor.

It localises to the cytoplasm. Functionally, could be involved in the maturation of NapA, the catalytic subunit of the periplasmic nitrate reductase, before its export into the periplasm. In Haemophilus influenzae (strain ATCC 51907 / DSM 11121 / KW20 / Rd), this protein is Ferredoxin-type protein NapF.